The sequence spans 69 residues: Large ribosomal subunit protein uL29 (69 aa).

The protein belongs to the universal ribosomal protein uL29 family.

The polypeptide is Large ribosomal subunit protein uL29 (Granulibacter bethesdensis (strain ATCC BAA-1260 / CGDNIH1)).